The following is a 308-amino-acid chain: Polyprenyl-phosphate transporter (308 aa).

8 helical membrane passes run 15-35 (GLAM…IAFI), 69-89 (INGL…ATLA), 91-111 (LISW…FGLI), 130-150 (LLWL…KPLH), 163-183 (AIAI…LLLI), 200-220 (ILLI…HILS), 228-248 (DVTL…IWPW), and 282-302 (PSQW…VLGL).

This sequence belongs to the PopT family.

It localises to the cell inner membrane. With respect to regulation, active in alkaline conditions. Flippase that catalyzes the transport of undecaprenyl phosphate (UndP) across the cytoplasmic membrane, from the external side to the cytoplasmic side. Is involved in UndP recycling during peptidoglycan synthesis. Required for cell shape maintenance at alkaline pH and peptidoglycan maintenance. Required by the cholera pathogen for growth and cell shape maintenance in the intestine. This chain is Polyprenyl-phosphate transporter, found in Vibrio cholerae serotype O1 (strain ATCC 39315 / El Tor Inaba N16961).